The chain runs to 251 residues: Protein crossbronx (251 aa).

The UBC core domain maps to 20-176 (QQEYKILAEY…TRENIRESLA (157 aa)). Positions 211–251 (QSKHLESQSQQSNNGGNGGGGGAATGLSWVKEGEFKPLSVE) are disordered. The span at 225–234 (GGNGGGGGAA) shows a compositional bias: gly residues.

It belongs to the ubiquitin-conjugating enzyme family. FTS subfamily.

This chain is Protein crossbronx (cbx), found in Drosophila willistoni (Fruit fly).